The sequence spans 509 residues: Monocarboxylate transporter 9 (509 aa).

At 1 to 12 (MELKKSPDGGWG) the chain is on the cytoplasmic side. 12 consecutive transmembrane segments (helical) span residues 13 to 33 (WVIVFVSFFTQFLCYGSPLAV), 53 to 73 (WVGSLASGVGLLASPVCSLCV), 80 to 100 (PVTIFSGFMVAGGLMLSSFAP), 102 to 122 (IYFLFFSYGIVVGLGCGLLYT), 137 to 157 (GLALGLISTGSSVGLFIYAAL), 164 to 184 (FYGLDGCLLIVGALALNILAC), 305 to 325 (VFSALFIAILLFDIGGFPPSL), 342 to 362 (IMPLISIIGIMTAVGKLLLGI), 372 to 392 (LYLYVATLIIMGLALCAIPFA), 398 to 418 (LALLSGILGFLTGNWSIFPYV), 433 to 453 (GILMFFAGLGNSLGPPIVGWF), and 462 to 482 (IAFYFSGFCVLLGGFILLLAA). Residues 483–509 (LPSWDTCNKQLPKPAPTTFLYKVASNV) are Cytoplasmic-facing.

The protein belongs to the major facilitator superfamily. Monocarboxylate porter (TC 2.A.1.13) family.

It is found in the cell membrane. The enzyme catalyses creatine(in) = creatine(out). It carries out the reaction (R)-carnitine(in) = (R)-carnitine(out). Its function is as follows. Extracellular pH-and Na(+)-sensitive low-affinity creatine transporter. Also functions as a pH-independent carnitine efflux transporter. The polypeptide is Monocarboxylate transporter 9 (SLC16A9) (Pongo abelii (Sumatran orangutan)).